The following is a 364-amino-acid chain: Homeobox protein Nkx-2.3 (364 aa).

The tract at residues 132–153 (GDCKAAEESERPKPRSRRKPRV) is disordered. Basic and acidic residues predominate over residues 135-144 (KAAEESERPK). The segment at residues 148–207 (RRKPRVLFSQAQVFELERRFKQQRYLSAPEREHLASSLKLTSTQVKIWFQNRRYKCKRQR) is a DNA-binding region (homeobox).

Belongs to the NK-2 homeobox family.

It is found in the nucleus. Its function is as follows. Transcription factor. This Homo sapiens (Human) protein is Homeobox protein Nkx-2.3 (NKX2-3).